Here is an 87-residue protein sequence, read N- to C-terminus: U15-lycotoxin-Ls1f (87 aa).

A signal peptide spans 1-20; sequence MNSKIFAVLLLLAFLSCVLS. The WAP domain maps to 21-66; sequence DQYCPKSSITACKKMNIRNDCCKDDDCTGGSWCCATPCGNFCKYPT. Cystine bridges form between Cys24–Cys54, Cys32–Cys58, Cys41–Cys53, Cys42–Cys80, and Cys47–Cys62.

This sequence belongs to the venom protein 11 family. 01 (wap-1) subfamily. Contains 5 disulfide bonds. As to expression, expressed by the venom gland.

It is found in the secreted. Has antibacterial activity. This chain is U15-lycotoxin-Ls1f, found in Lycosa singoriensis (Wolf spider).